Reading from the N-terminus, the 83-residue chain is MSSGGLLLLLGLLTLWEGLTPVSSKDRPEFCELPADSGSCKGNFQAFYYHPVHRTCLEFIYGGCEGNANNFKTIDECKRTCAA.

An N-terminal signal peptide occupies residues Met1 to Ser24. Residues Cys31–Cys81 form the BPTI/Kunitz inhibitor domain. Intrachain disulfides connect Cys31–Cys81, Cys40–Cys64, and Cys56–Cys77.

It is found in the secreted. Functionally, serine protease inhibitor. This Pseudechis porphyriacus (Red-bellied black snake) protein is Blackelin-5.